The following is a 229-amino-acid chain: UPF0758 protein MM_2791 (229 aa).

The MPN domain maps to 106 to 228 (KISSPKDVYT…YVSLKDEGFV (123 aa)). Positions 177, 179, and 190 each coordinate Zn(2+). The JAMM motif motif lies at 177–190 (HNHPSGDPSPSRED).

This sequence belongs to the UPF0758 family.

The chain is UPF0758 protein MM_2791 from Methanosarcina mazei (strain ATCC BAA-159 / DSM 3647 / Goe1 / Go1 / JCM 11833 / OCM 88) (Methanosarcina frisia).